The following is a 166-amino-acid chain: Glycine-rich RNA-binding protein GRP1A (166 aa).

The RRM domain maps to 8–86 (YRCFVGGLAW…RSITVNEAQS (79 aa)). Residues 68 to 166 (GMNGQDLDGR…YGGSGGGGGW (99 aa)) are disordered. Composition is skewed to gly residues over residues 88-146 (GSGG…YGGG) and 153-166 (EGGG…GGGW).

As to expression, predominantly expressed in meristematic and growing tissue.

It is found in the nucleus. Functionally, may play a general role in circadian phenomena associated with meristematic tissue. The protein is Glycine-rich RNA-binding protein GRP1A of Sinapis alba (White mustard).